A 244-amino-acid polypeptide reads, in one-letter code: Type III pantothenate kinase (244 aa).

7-14 provides a ligand contact to ATP; sequence DIGNTRLK. Residues Tyr95 and 102 to 105 each bind substrate; that span reads GIDR. Asp104 (proton acceptor) is an active-site residue. Thr126 lines the ATP pocket. Residue Thr177 coordinates substrate.

It belongs to the type III pantothenate kinase family. Homodimer. NH4(+) serves as cofactor. The cofactor is K(+).

It is found in the cytoplasm. It carries out the reaction (R)-pantothenate + ATP = (R)-4'-phosphopantothenate + ADP + H(+). It functions in the pathway cofactor biosynthesis; coenzyme A biosynthesis; CoA from (R)-pantothenate: step 1/5. Functionally, catalyzes the phosphorylation of pantothenate (Pan), the first step in CoA biosynthesis. The polypeptide is Type III pantothenate kinase (Acinetobacter baumannii (strain ACICU)).